The following is a 242-amino-acid chain: Phosphomannomutase 2 (242 aa).

Aspartate 8 functions as the Nucleophile in the catalytic mechanism. Positions 8 and 10 each coordinate Mg(2+). Aspartate 10 acts as the Proton donor/acceptor in catalysis. Positions 17, 119, 130, and 137 each coordinate alpha-D-mannose 1-phosphate. Lysine 145 is modified (N6-acetyllysine). The alpha-D-mannose 1-phosphate site is built by serine 175 and aspartate 177. Mg(2+) is bound by residues aspartate 205, phenylalanine 217, aspartate 219, and threonine 222.

The protein belongs to the eukaryotic PMM family. Homodimer.

The protein localises to the cytoplasm. The catalysed reaction is alpha-D-mannose 1-phosphate = D-mannose 6-phosphate. The protein operates within nucleotide-sugar biosynthesis; GDP-alpha-D-mannose biosynthesis; alpha-D-mannose 1-phosphate from D-fructose 6-phosphate: step 2/2. In terms of biological role, involved in the synthesis of the GDP-mannose and dolichol-phosphate-mannose required for a number of critical mannosyl transfer reactions. The sequence is that of Phosphomannomutase 2 (Pmm2) from Mus musculus (Mouse).